Consider the following 218-residue polypeptide: Mitochondrial import inner membrane translocase subunit TIM17-1 (218 aa).

4 consecutive transmembrane segments (helical) span residues 19 to 36 (VGGA…YHLI), 66 to 82 (FSVW…ALVY), 89 to 105 (PWNS…FLSL), and 116 to 133 (ALVG…GIML).

The protein belongs to the Tim17/Tim22/Tim23 family. In terms of assembly, component of the TIM17:23 complex at least composed of TIM23, TIM17 and TIM50. The complex interacts with the TIM44 component of the PAM complex. As to expression, expressed in flowers, leaves and cotyledons, and at very low levels in roots.

It is found in the mitochondrion inner membrane. Functionally, essential component of the TIM17:23 complex, a complex that mediates the translocation of transit peptide-containing proteins across the mitochondrial inner membrane. Links the inner and outer membranes. The polypeptide is Mitochondrial import inner membrane translocase subunit TIM17-1 (TIM17-1) (Arabidopsis thaliana (Mouse-ear cress)).